Reading from the N-terminus, the 114-residue chain is Large ribosomal subunit protein uL22 (114 aa).

It belongs to the universal ribosomal protein uL22 family. As to quaternary structure, part of the 50S ribosomal subunit.

Functionally, this protein binds specifically to 23S rRNA; its binding is stimulated by other ribosomal proteins, e.g. L4, L17, and L20. It is important during the early stages of 50S assembly. It makes multiple contacts with different domains of the 23S rRNA in the assembled 50S subunit and ribosome. In terms of biological role, the globular domain of the protein is located near the polypeptide exit tunnel on the outside of the subunit, while an extended beta-hairpin is found that lines the wall of the exit tunnel in the center of the 70S ribosome. This is Large ribosomal subunit protein uL22 from Bacillus licheniformis (strain ATCC 14580 / DSM 13 / JCM 2505 / CCUG 7422 / NBRC 12200 / NCIMB 9375 / NCTC 10341 / NRRL NRS-1264 / Gibson 46).